A 298-amino-acid polypeptide reads, in one-letter code: Urease accessory protein UreD (298 aa).

This sequence belongs to the UreD family. In terms of assembly, ureD, UreF and UreG form a complex that acts as a GTP-hydrolysis-dependent molecular chaperone, activating the urease apoprotein by helping to assemble the nickel containing metallocenter of UreC. The UreE protein probably delivers the nickel.

Its subcellular location is the cytoplasm. Functionally, required for maturation of urease via the functional incorporation of the urease nickel metallocenter. This chain is Urease accessory protein UreD, found in Marinobacter nauticus (strain ATCC 700491 / DSM 11845 / VT8) (Marinobacter aquaeolei).